Consider the following 735-residue polypeptide: Translation initiation factor IF-2 (735 aa).

Composition is skewed to basic and acidic residues over residues 52 to 66 (VNSEKKAEKKTEKPK) and 101 to 117 (KGKETKKTEAQQQEKKL). A disordered region spans residues 52 to 154 (VNSEKKAEKK…PAKKEKELPK (103 aa)). The span at 121 to 133 (AKKKGKGPMKGKK) shows a compositional bias: basic residues. Low complexity predominate over residues 134–145 (QAAPASKQAQQP). The 170-residue stretch at 236–405 (ERPPVVTIMG…LLVSEMEELK (170 aa)) folds into the tr-type G domain. The G1 stretch occupies residues 245–252 (GHVDHGKT). 245–252 (GHVDHGKT) serves as a coordination point for GTP. A G2 region spans residues 270 to 274 (GITQH). Residues 291–294 (DTPG) form a G3 region. Residues 291-295 (DTPGH) and 345-348 (NKMD) contribute to the GTP site. A G4 region spans residues 345–348 (NKMD). The tract at residues 381 to 383 (SAK) is G5.

The protein belongs to the TRAFAC class translation factor GTPase superfamily. Classic translation factor GTPase family. IF-2 subfamily.

It localises to the cytoplasm. Its function is as follows. One of the essential components for the initiation of protein synthesis. Protects formylmethionyl-tRNA from spontaneous hydrolysis and promotes its binding to the 30S ribosomal subunits. Also involved in the hydrolysis of GTP during the formation of the 70S ribosomal complex. The polypeptide is Translation initiation factor IF-2 (Geobacillus thermodenitrificans (strain NG80-2)).